We begin with the raw amino-acid sequence, 434 residues long: Gamma-glutamyl phosphate reductase (434 aa).

Polar residues predominate over residues 1-11; it reads MTNSNEAQENA. The tract at residues 1-26 is disordered; sequence MTNSNEAQENALSPERQAERDEVLAK. Basic and acidic residues predominate over residues 16 to 25; it reads RQAERDEVLA.

It belongs to the gamma-glutamyl phosphate reductase family.

Its subcellular location is the cytoplasm. It carries out the reaction L-glutamate 5-semialdehyde + phosphate + NADP(+) = L-glutamyl 5-phosphate + NADPH + H(+). Its pathway is amino-acid biosynthesis; L-proline biosynthesis; L-glutamate 5-semialdehyde from L-glutamate: step 2/2. Its function is as follows. Catalyzes the NADPH-dependent reduction of L-glutamate 5-phosphate into L-glutamate 5-semialdehyde and phosphate. The product spontaneously undergoes cyclization to form 1-pyrroline-5-carboxylate. This chain is Gamma-glutamyl phosphate reductase, found in Corynebacterium jeikeium (strain K411).